The primary structure comprises 484 residues: tRNA sulfurtransferase (484 aa).

A THUMP domain is found at 63-167 (REMIERLTCT…LDRLFVIHRQ (105 aa)). ATP-binding positions include 185–186 (LM), Lys-267, Gly-289, and Gln-298. An intrachain disulfide couples Cys-346 to Cys-457. The Rhodanese domain occupies 405–483 (VLPGQIVIDI…GHTNVRVYRP (79 aa)). Cys-457 acts as the Cysteine persulfide intermediate in catalysis.

It belongs to the ThiI family.

It localises to the cytoplasm. The catalysed reaction is [ThiI sulfur-carrier protein]-S-sulfanyl-L-cysteine + a uridine in tRNA + 2 reduced [2Fe-2S]-[ferredoxin] + ATP + H(+) = [ThiI sulfur-carrier protein]-L-cysteine + a 4-thiouridine in tRNA + 2 oxidized [2Fe-2S]-[ferredoxin] + AMP + diphosphate. The enzyme catalyses [ThiS sulfur-carrier protein]-C-terminal Gly-Gly-AMP + S-sulfanyl-L-cysteinyl-[cysteine desulfurase] + AH2 = [ThiS sulfur-carrier protein]-C-terminal-Gly-aminoethanethioate + L-cysteinyl-[cysteine desulfurase] + A + AMP + 2 H(+). It functions in the pathway cofactor biosynthesis; thiamine diphosphate biosynthesis. Functionally, catalyzes the ATP-dependent transfer of a sulfur to tRNA to produce 4-thiouridine in position 8 of tRNAs, which functions as a near-UV photosensor. Also catalyzes the transfer of sulfur to the sulfur carrier protein ThiS, forming ThiS-thiocarboxylate. This is a step in the synthesis of thiazole, in the thiamine biosynthesis pathway. The sulfur is donated as persulfide by IscS. In Pseudomonas aeruginosa (strain UCBPP-PA14), this protein is tRNA sulfurtransferase.